Reading from the N-terminus, the 258-residue chain is Small ribosomal subunit protein mS23 (258 aa).

Residues 230–239 show a composition bias toward polar residues; sequence KKNSTKQSWA. Residues 230–258 form a disordered region; it reads KKNSTKQSWAEATEEKEEQDSAEPEELKL. Residues 241 to 258 are compositionally biased toward acidic residues; sequence ATEEKEEQDSAEPEELKL.

Belongs to the mitochondrion-specific ribosomal protein mS23 family. In terms of assembly, component of the mitochondrial small ribosomal subunit.

Its subcellular location is the mitochondrion. The polypeptide is Small ribosomal subunit protein mS23 (RSM25) (Eremothecium gossypii (strain ATCC 10895 / CBS 109.51 / FGSC 9923 / NRRL Y-1056) (Yeast)).